Here is a 344-residue protein sequence, read N- to C-terminus: N-acetyl-gamma-glutamyl-phosphate reductase 1 (344 aa).

Cys-150 is an active-site residue.

This sequence belongs to the NAGSA dehydrogenase family. Type 1 subfamily.

Its subcellular location is the cytoplasm. It catalyses the reaction N-acetyl-L-glutamate 5-semialdehyde + phosphate + NADP(+) = N-acetyl-L-glutamyl 5-phosphate + NADPH + H(+). The protein operates within amino-acid biosynthesis; L-arginine biosynthesis; N(2)-acetyl-L-ornithine from L-glutamate: step 3/4. In terms of biological role, catalyzes the NADPH-dependent reduction of N-acetyl-5-glutamyl phosphate to yield N-acetyl-L-glutamate 5-semialdehyde. The polypeptide is N-acetyl-gamma-glutamyl-phosphate reductase 1 (Pseudomonas putida (strain ATCC 47054 / DSM 6125 / CFBP 8728 / NCIMB 11950 / KT2440)).